Reading from the N-terminus, the 209-residue chain is Uracil phosphoribosyltransferase (209 aa).

5-phospho-alpha-D-ribose 1-diphosphate is bound by residues arginine 79, arginine 104, and 131-139 (DPMLATGGS). Residues isoleucine 194 and 199–201 (GDA) contribute to the uracil site. Aspartate 200 provides a ligand contact to 5-phospho-alpha-D-ribose 1-diphosphate.

The protein belongs to the UPRTase family. It depends on Mg(2+) as a cofactor.

The enzyme catalyses UMP + diphosphate = 5-phospho-alpha-D-ribose 1-diphosphate + uracil. It participates in pyrimidine metabolism; UMP biosynthesis via salvage pathway; UMP from uracil: step 1/1. Its activity is regulated as follows. Allosterically activated by GTP. Its function is as follows. Catalyzes the conversion of uracil and 5-phospho-alpha-D-ribose 1-diphosphate (PRPP) to UMP and diphosphate. This chain is Uracil phosphoribosyltransferase, found in Clostridium perfringens (strain ATCC 13124 / DSM 756 / JCM 1290 / NCIMB 6125 / NCTC 8237 / Type A).